Here is a 172-residue protein sequence, read N- to C-terminus: Protein sym-1 (172 aa).

The next 5 membrane-spanning stretches (helical) occupy residues 13–33, 52–72, 94–114, 128–148, and 152–172; these read PLLTQAVTTSILFGVGDVAAQ, MVLYGGAVFGPAATTWFRFLQ, GLFAPTFIGIFLGSMAVLEGT, LSTNWMVWPFVQMVNFKVVPL, and VLFVNVISIGWNCYLSWLNGQ.

It belongs to the peroxisomal membrane protein PXMP2/4 family.

It localises to the mitochondrion inner membrane. May be involved in cellular response to stress. Required to maintain mitochondrial DNA (mtDNA) integrity and stability. The protein is Protein sym-1 (sym-1) of Neurospora crassa (strain ATCC 24698 / 74-OR23-1A / CBS 708.71 / DSM 1257 / FGSC 987).